The sequence spans 394 residues: MQNSPLTADCSLNAGRPLTIGLVAGETSGDILGAGLIRALKVQVPNARFVGVAGPLMQAEGCEAWYEMEELAVMGVVEVLERLPRLLKIRKDLTQRFSELSPDVFVGIDAPDFNITLEGRLKQRGIRTIHYVSPSVWAWRQKRVFKIGKATDMVLAFLPFEKAFYDRFNVPCRFIGHTMADAMPLVPDQQAARAELGIAPNATCLALLPGSRHSEVEMLSADFLRTAVILRDKLPNLEVVVPLVNSKRREQFERIKAEIAPDLSVHLLDGKARVAMIASDAALLASGTAALECMLAKCPMVVGYRMKPFTFWLAERLVKTPYVSLPNLLAGEELVTELLQQECQPQKLAGALLPLLQGGSEIAALKERFLVLHQSIRCGADEQAAQAVLELADR.

This sequence belongs to the LpxB family.

It carries out the reaction 2-N,3-O-bis[(3R)-3-hydroxytetradecanoyl]-alpha-D-glucosaminyl 1-phosphate + UDP-2-N,3-O-bis[(3R)-3-hydroxytetradecanoyl]-alpha-D-glucosamine = lipid A disaccharide (E. coli) + UDP + H(+). It catalyses the reaction a lipid X + a UDP-2-N,3-O-bis[(3R)-3-hydroxyacyl]-alpha-D-glucosamine = a lipid A disaccharide + UDP + H(+). Its pathway is glycolipid biosynthesis; lipid IV(A) biosynthesis; lipid IV(A) from (3R)-3-hydroxytetradecanoyl-[acyl-carrier-protein] and UDP-N-acetyl-alpha-D-glucosamine: step 5/6. Functionally, condensation of UDP-2,3-diacylglucosamine and 2,3-diacylglucosamine-1-phosphate to form lipid A disaccharide, a precursor of lipid A, a phosphorylated glycolipid that anchors the lipopolysaccharide to the outer membrane of the cell. This is Lipid-A-disaccharide synthase from Yersinia pestis.